The sequence spans 602 residues: MDTLFRLVSLQAASEQQQQQQQSASYNSRSTTSSGSRSSSHQTNASYSYYHHSSNSGGGGGGGGGYYYGGQQPPPSQYYYLEPYQEECGNAPHHQLYMDEDFSSSSSSRHFHHGARVQQQQPPASSTPTGTAPTPPLSTSSTAAGAGHGLFEAADLSFPPDLNLDFSSPASSSGGGTASSGAVGGGGGGRWASQLLLECARSVAARDSQRVQQLMWMLNELASPYGDVEQKLASYFLQGLFARLTASGPRTLRTLAAASDRNTSFDSTRRTALRFQELSPWSSFGHVAANGAILESFLEVAAAASSETQRFHILDLSNTFCTQWPTLLEALATRSADETPHLSITTVVSAAPSAPTAAVQRVMREIGQRMEKFARLMGVPFRFRAVHHSGDLAELDLDALDLREGGATTALAVNCVNSLRGVVPGRARRRDAFAASLRRLDPRVVTVVEEEADLVASDPDASSATEEGGDTEAAFLKVFGEGLRFFSAYMDSLEESFPKTSNERLALERGAGRAIVDLVSCPASESMERRETAASWARRMRSAGFSPVAFSEDVADDVRSLLRRYREGWSMREAGTDDSAAGAGVFLAWKEQPLVWASAWRP.

Residues 12-55 show a composition bias toward low complexity; that stretch reads AASEQQQQQQQSASYNSRSTTSSGSRSSSHQTNASYSYYHHSSN. Disordered stretches follow at residues 12-69, 101-145, and 165-185; these read AASE…YYYG, DFSS…TAAG, and DFSS…AVGG. A compositionally biased stretch (gly residues) spans 56 to 68; that stretch reads SGGGGGGGGGYYY. Residues 122–145 are compositionally biased toward low complexity; sequence PPASSTPTGTAPTPPLSTSSTAAG. The segment covering 173 to 185 has biased composition (gly residues); sequence SGGGTASSGAVGG. The GRAS domain occupies 183-601; sequence VGGGGGGRWA…QPLVWASAWR (419 aa). Residues 190–253 are leucine repeat I (LRI); sequence RWASQLLLEC…LTASGPRTLR (64 aa). Positions 272–349 are VHIID; sequence ALRFQELSPW…PHLSITTVVS (78 aa). A VHIID motif is present at residues 311–315; sequence FHILD. The tract at residues 365-401 is leucine repeat II (LRII); it reads EIGQRMEKFARLMGVPFRFRAVHHSGDLAELDLDALD. A PFYRE region spans residues 411 to 517; the sequence is LAVNCVNSLR…ERGAGRAIVD (107 aa). The tract at residues 520 to 601 is SAW; that stretch reads SCPASESMER…QPLVWASAWR (82 aa).

Belongs to the GRAS family. Interacts with SCR1. Interacts with SMOS1. Expressed in leaves and roots. Detected in the stele, the endodermis and part of the cortex.

The protein localises to the nucleus. Its function is as follows. Transcription factor required for the asymmetric cell division involved in radial pattern formation in roots. Essential for both cell division and cell specification. The chain is Protein SHORT-ROOT 1 from Oryza sativa subsp. japonica (Rice).